The primary structure comprises 301 residues: Probable alpha-L-glutamate ligase (301 aa).

Residues 104–287 (LQLLSRRGIG…VAGMIIGYLE (184 aa)) form the ATP-grasp domain. ATP-binding positions include Lys-141, 178 to 179 (EY), Asp-187, and 211 to 213 (RSN). Mg(2+)-binding residues include Asp-248, Glu-260, and Asn-262. Mn(2+) is bound by residues Asp-248, Glu-260, and Asn-262.

This sequence belongs to the RimK family. Mg(2+) serves as cofactor. It depends on Mn(2+) as a cofactor.

In Pseudomonas syringae pv. syringae (strain B728a), this protein is Probable alpha-L-glutamate ligase.